The sequence spans 343 residues: Aspartate carbamoyltransferase catalytic subunit (343 aa).

Positions 71 and 72 each coordinate carbamoyl phosphate. Lys99 contributes to the L-aspartate binding site. Carbamoyl phosphate-binding residues include Arg121, His149, and Gln152. Positions 195 and 249 each coordinate L-aspartate. The carbamoyl phosphate site is built by Gly290 and Pro291.

Belongs to the aspartate/ornithine carbamoyltransferase superfamily. ATCase family. In terms of assembly, heterododecamer (2C3:3R2) of six catalytic PyrB chains organized as two trimers (C3), and six regulatory PyrI chains organized as three dimers (R2).

It carries out the reaction carbamoyl phosphate + L-aspartate = N-carbamoyl-L-aspartate + phosphate + H(+). It functions in the pathway pyrimidine metabolism; UMP biosynthesis via de novo pathway; (S)-dihydroorotate from bicarbonate: step 2/3. Catalyzes the condensation of carbamoyl phosphate and aspartate to form carbamoyl aspartate and inorganic phosphate, the committed step in the de novo pyrimidine nucleotide biosynthesis pathway. The sequence is that of Aspartate carbamoyltransferase catalytic subunit from Rhodopirellula baltica (strain DSM 10527 / NCIMB 13988 / SH1).